We begin with the raw amino-acid sequence, 182 residues long: Transcriptional repressor NrdR (182 aa).

The interval 1–24 (MRCPYCGGLDTQVRDSRPTEDNTA) is disordered. A zinc finger lies at 3–34 (CPYCGGLDTQVRDSRPTEDNTAIRRRRICPDC). Residues 12-24 (QVRDSRPTEDNTA) show a composition bias toward basic and acidic residues. In terms of domain architecture, ATP-cone spans 49–139 (LMVLKRSGRR…VYRNFREAKD (91 aa)). The interval 146-182 (ELSQPELAQSDDVKAEGGAEGGRDKPKAAGKPPRSAE) is disordered. Positions 156–172 (DDVKAEGGAEGGRDKPK) are enriched in basic and acidic residues.

The protein belongs to the NrdR family. The cofactor is Zn(2+).

Functionally, negatively regulates transcription of bacterial ribonucleotide reductase nrd genes and operons by binding to NrdR-boxes. The chain is Transcriptional repressor NrdR from Xanthobacter autotrophicus (strain ATCC BAA-1158 / Py2).